Here is a 122-residue protein sequence, read N- to C-terminus: Large ribosomal subunit protein uL14c (122 aa).

It belongs to the universal ribosomal protein uL14 family. As to quaternary structure, part of the 50S ribosomal subunit.

It localises to the plastid. The protein resides in the chloroplast. Its function is as follows. Binds to 23S rRNA. In Arabis hirsuta (Hairy rock-cress), this protein is Large ribosomal subunit protein uL14c.